Reading from the N-terminus, the 303-residue chain is Geranylgeranyl pyrophosphate synthase (303 aa).

Isopentenyl diphosphate is bound by residues lysine 30, arginine 33, and histidine 62. Positions 69 and 73 each coordinate Mg(2+). Arginine 78 is a dimethylallyl diphosphate binding site. Arginine 79 provides a ligand contact to isopentenyl diphosphate. Residues lysine 156, threonine 157, glutamine 190, lysine 207, and lysine 217 each contribute to the dimethylallyl diphosphate site.

It belongs to the FPP/GGPP synthase family. It depends on Mg(2+) as a cofactor.

It localises to the cytoplasm. It carries out the reaction isopentenyl diphosphate + dimethylallyl diphosphate = (2E)-geranyl diphosphate + diphosphate. It catalyses the reaction isopentenyl diphosphate + (2E)-geranyl diphosphate = (2E,6E)-farnesyl diphosphate + diphosphate. The enzyme catalyses isopentenyl diphosphate + (2E,6E)-farnesyl diphosphate = (2E,6E,10E)-geranylgeranyl diphosphate + diphosphate. The protein operates within isoprenoid biosynthesis; farnesyl diphosphate biosynthesis; farnesyl diphosphate from geranyl diphosphate and isopentenyl diphosphate: step 1/1. It participates in isoprenoid biosynthesis; geranyl diphosphate biosynthesis; geranyl diphosphate from dimethylallyl diphosphate and isopentenyl diphosphate: step 1/1. Its pathway is isoprenoid biosynthesis; geranylgeranyl diphosphate biosynthesis; geranylgeranyl diphosphate from farnesyl diphosphate and isopentenyl diphosphate: step 1/1. Catalyzes the trans-addition of the three molecules of IPP onto DMAPP to form geranylgeranyl pyrophosphate. The protein is Geranylgeranyl pyrophosphate synthase of Mucor circinelloides f. lusitanicus (Mucor racemosus var. lusitanicus).